We begin with the raw amino-acid sequence, 506 residues long: CDK5 regulatory subunit-associated protein 3 (506 aa).

3 short sequence motifs (shuffled ATG8-binding motif) span residues 267–270, 292–295, and 310–313; these read IDWG. Residues 269–506 form a required for interaction with UFL1 and mediates interaction with CHEK1 region; the sequence is WGDFGVEAVS…RPVNLMGTSL (238 aa). Positions 355-370 are RPL10a-binding domain (RBD); that stretch reads DELMELEIFLAQRAVE. Residue K450 forms a Glycyl lysine isopeptide (Lys-Gly) (interchain with G-Cter in SUMO2) linkage.

It belongs to the CDK5RAP3 family. In terms of assembly, substrate adapter component of the UFM1 ribosome E3 ligase (UREL) complex, composed of UFL1, DDRGK1 and CDK5RAP3. Interaction with UFL1 anchors CDK5RAP3 in the cytoplasm, preventing its translocation to the nucleus which allows expression of the CCND1 cyclin and progression of cells through the G1/S transition. Interacts with ATG8 family proteins MAP1LC3A, MAP1LC3B, GABARAP, GABARAPL1 and GABARAPL2. Interacts with CDK5R1; competes with CDK5RAP1 and CDK5RAP2. Interacts with RELA. Interacts with CHEK1; may negatively regulate CHEK1 and thereby stimulate entry into mitosis. Interacts with CDKN2A/ARF and MDM2; forms a ternary complex involved in regulation of p53/TP53. Interacts with MAPK14. Interacts with CCNB1. Interacts with TUBG1; may regulate CDK5RAP3 in mitotic G2/M transition checkpoint. (Microbial infection) Interacts with hepatitis B virus large envelope protein mutant pre-s2; promotes mitotic entry. In terms of processing, may be phosphorylated by CDK5. Ubiquitinated. Probably triggers proteasomal degradation and is negatively regulated by UFL1. Post-translationally, may be ufmylated. In terms of processing, cleaved by caspases early during apoptosis, the resulting peptides may play a role in rupture of the nuclear envelope. As to expression, ubiquitously expressed. Expressed in heart, brain, placenta, lung, liver, skeletal muscle, kidney and pancreas. Isoform 3 is expressed in kidney, liver, skeletal muscle and placenta.

It is found in the endoplasmic reticulum membrane. Its subcellular location is the cytoplasm. The protein localises to the nucleus. The protein resides in the cytoskeleton. It localises to the microtubule organizing center. It is found in the centrosome. Substrate adapter of E3 ligase complexes mediating ufmylation, the covalent attachment of the ubiquitin-like modifier UFM1 to substrate proteins, and which is involved in various processes, such as ribosome recycling and reticulophagy (also called ER-phagy). As part of the UREL complex, plays a key role in ribosome recycling by promoting mono-ufmylation of RPL26/uL24 subunit of the 60S ribosome. Ufmylation of RPL26/uL24 occurs on free 60S ribosomes following ribosome dissociation: it weakens the junction between post-termination 60S subunits and SEC61 translocons, promoting release and recycling of the large ribosomal subunit from the endoplasmic reticulum membrane. Ufmylation of RPL26/uL24 and subsequent 60S ribosome recycling either take place after normal termination of translation or after ribosome stalling during cotranslational translocation at the endoplasmic reticulum. Within the UREL complex, CDK5RAP3 acts as a substrate adapter that constrains UFL1 ligase activity to mono-ufmylate RPL26/uL24 at 'Lys-134'. The UREL complex is also involved in reticulophagy in response to endoplasmic reticulum stress by promoting ufmylation of proteins such as CYB5R3, thereby promoting lysosomal degradation of ufmylated proteins. Also acts as a regulator of transcription: negatively regulates NF-kappa-B-mediated gene transcription through the control of RELA phosphorylation. Also regulates mitotic G2/M transition checkpoint and mitotic G2 DNA damage checkpoint. Through its interaction with CDKN2A/ARF and MDM2 may induce MDM2-dependent p53/TP53 ubiquitination, stabilization and activation in the nucleus, thereby promoting G1 cell cycle arrest and inhibition of cell proliferation. May also play a role in the rupture of the nuclear envelope during apoptosis. May regulate MAPK14 activity by regulating its dephosphorylation by PPM1D/WIP1. Required for liver development. In terms of biological role, (Microbial infection) May be negatively regulated by hepatitis B virus large envelope protein mutant pre-s2 to promote mitotic entry. The chain is CDK5 regulatory subunit-associated protein 3 from Homo sapiens (Human).